Here is a 251-residue protein sequence, read N- to C-terminus: Flap endonuclease Xni (251 aa).

Residue aspartate 104 coordinates Mg(2+). The 90-residue stretch at 160–249 folds into the 5'-3' exonuclease domain; sequence VLPRQLPDYW…IDGNLQQLRL (90 aa). K(+) contacts are provided by leucine 171, alanine 172, proline 180, valine 182, and isoleucine 185. An interaction with DNA region spans residues 184–189; that stretch reads GIGPKS.

Belongs to the Xni family. Requires Mg(2+) as cofactor. The cofactor is K(+).

Its function is as follows. Has flap endonuclease activity. During DNA replication, flap endonucleases cleave the 5'-overhanging flap structure that is generated by displacement synthesis when DNA polymerase encounters the 5'-end of a downstream Okazaki fragment. The protein is Flap endonuclease Xni of Salmonella choleraesuis (strain SC-B67).